Here is a 264-residue protein sequence, read N- to C-terminus: Stage 0 sporulation protein A (264 aa).

A Response regulatory domain is found at 5-123; the sequence is KVCLVDDNKE…NLTSHIRQVS (119 aa). Ca(2+) is bound by residues Asp10, Asp11, and Asp56. Position 56 is a 4-aspartylphosphate (Asp56). The H-T-H motif DNA-binding region spans 196–215; sequence PDIAKKYNTTASRVERAIRH.

It depends on Ca(2+) as a cofactor. In terms of processing, phosphorylated by KinA and KinB.

The protein resides in the cytoplasm. Functionally, may play the central regulatory role in sporulation. It may be an element of the effector pathway responsible for the activation of sporulation genes in response to nutritional stress. Spo0A may act in concert with Spo0H (a sigma factor) to control the expression of some genes that are critical to the sporulation process. Repressor of abrB, activator of the spoIIa operon. Binds the DNA sequence 5'-TGNCGAA-3' (0A box). The polypeptide is Stage 0 sporulation protein A (spo0A) (Bacillus anthracis).